Here is a 188-residue protein sequence, read N- to C-terminus: HTH-type transcriptional repressor AcnR (188 aa).

Residues 10–70 (TNSRQEILEG…ALAREDAARM (61 aa)) form the HTH tetR-type domain. Residues 33–52 (TVRRLEEATGKSRGAIFHHF) constitute a DNA-binding region (H-T-H motif). Residues 79-80 (LV), Arg-130, and Asn-134 each bind citrate. Glu-181 is a binding site for Mg(2+). A citrate-binding site is contributed by Arg-185.

In terms of assembly, homodimer.

AcnR negatively controls the expression of the aconitase gene acn. Binds to the imperfect inverted repeat in the acn promoter region. This Corynebacterium glutamicum (strain ATCC 13032 / DSM 20300 / JCM 1318 / BCRC 11384 / CCUG 27702 / LMG 3730 / NBRC 12168 / NCIMB 10025 / NRRL B-2784 / 534) protein is HTH-type transcriptional repressor AcnR.